We begin with the raw amino-acid sequence, 180 residues long: Large ribosomal subunit protein uL5 (180 aa).

The protein belongs to the universal ribosomal protein uL5 family. Part of the 50S ribosomal subunit; part of the 5S rRNA/L5/L18/L25 subcomplex. Contacts the 5S rRNA and the P site tRNA. Forms a bridge to the 30S subunit in the 70S ribosome.

This is one of the proteins that bind and probably mediate the attachment of the 5S RNA into the large ribosomal subunit, where it forms part of the central protuberance. In the 70S ribosome it contacts protein S13 of the 30S subunit (bridge B1b), connecting the 2 subunits; this bridge is implicated in subunit movement. Contacts the P site tRNA; the 5S rRNA and some of its associated proteins might help stabilize positioning of ribosome-bound tRNAs. This is Large ribosomal subunit protein uL5 from Chlamydia trachomatis serovar A (strain ATCC VR-571B / DSM 19440 / HAR-13).